Here is a 225-residue protein sequence, read N- to C-terminus: 2-C-methyl-D-erythritol 4-phosphate cytidylyltransferase (225 aa).

The protein belongs to the IspD/TarI cytidylyltransferase family. IspD subfamily.

It carries out the reaction 2-C-methyl-D-erythritol 4-phosphate + CTP + H(+) = 4-CDP-2-C-methyl-D-erythritol + diphosphate. The protein operates within isoprenoid biosynthesis; isopentenyl diphosphate biosynthesis via DXP pathway; isopentenyl diphosphate from 1-deoxy-D-xylulose 5-phosphate: step 2/6. In terms of biological role, catalyzes the formation of 4-diphosphocytidyl-2-C-methyl-D-erythritol from CTP and 2-C-methyl-D-erythritol 4-phosphate (MEP). This is 2-C-methyl-D-erythritol 4-phosphate cytidylyltransferase from Prochlorococcus marinus (strain MIT 9313).